Reading from the N-terminus, the 359-residue chain is Uroporphyrinogen decarboxylase (359 aa).

Substrate is bound by residues 36–40 (RQAGR), aspartate 85, tyrosine 160, serine 215, and histidine 338.

It belongs to the uroporphyrinogen decarboxylase family. In terms of assembly, homodimer.

Its subcellular location is the cytoplasm. The catalysed reaction is uroporphyrinogen III + 4 H(+) = coproporphyrinogen III + 4 CO2. The protein operates within porphyrin-containing compound metabolism; protoporphyrin-IX biosynthesis; coproporphyrinogen-III from 5-aminolevulinate: step 4/4. In terms of biological role, catalyzes the decarboxylation of four acetate groups of uroporphyrinogen-III to yield coproporphyrinogen-III. The sequence is that of Uroporphyrinogen decarboxylase from Corynebacterium efficiens (strain DSM 44549 / YS-314 / AJ 12310 / JCM 11189 / NBRC 100395).